Reading from the N-terminus, the 177-residue chain is Thymidine kinase (177 aa).

11-18 serves as a coordination point for ATP; it reads GPMFSGKS. The active-site Proton acceptor is the E83. F113 serves as a coordination point for substrate. Residues C138 and C141 each coordinate Zn(2+). 157 to 161 contacts substrate; it reads IEIIG. C170 and C173 together coordinate Zn(2+).

This sequence belongs to the thymidine kinase family. As to quaternary structure, homotetramer. Two molecules of substrate bind to each enzyme tetramer.

It catalyses the reaction thymidine + ATP = dTMP + ADP + H(+). In terms of biological role, phosphorylates thymidine and thymidine analogs, such as azidothymidine (AZT). Part of the salvage pathway for pyrimidine deoxyribonucleotide synthesis. This chain is Thymidine kinase (OPG101), found in Vaccinia virus (strain Copenhagen) (VACV).